Here is a 337-residue protein sequence, read N- to C-terminus: DNA-directed RNA polymerase subunit alpha (337 aa).

The interval methionine 1–glutamate 233 is alpha N-terminal domain (alpha-NTD). Positions phenylalanine 249–tyrosine 337 are alpha C-terminal domain (alpha-CTD).

This sequence belongs to the RNA polymerase alpha chain family. As to quaternary structure, homodimer. The RNAP catalytic core consists of 2 alpha, 1 beta, 1 beta' and 1 omega subunit. When a sigma factor is associated with the core the holoenzyme is formed, which can initiate transcription.

It catalyses the reaction RNA(n) + a ribonucleoside 5'-triphosphate = RNA(n+1) + diphosphate. In terms of biological role, DNA-dependent RNA polymerase catalyzes the transcription of DNA into RNA using the four ribonucleoside triphosphates as substrates. The chain is DNA-directed RNA polymerase subunit alpha from Brucella canis (strain ATCC 23365 / NCTC 10854 / RM-666).